The primary structure comprises 603 residues: Penicillin-binding protein activator LpoA (603 aa).

The signal sequence occupies residues 1–26 (MAMNHHQRRSVPRLLTPIALSIVLSA). Residue Cys27 is the site of N-palmitoyl cysteine attachment. The S-diacylglycerol cysteine moiety is linked to residue Cys27.

Belongs to the LpoA family. In terms of assembly, interacts with PBP1a.

It is found in the cell outer membrane. Regulator of peptidoglycan synthesis that is essential for the function of penicillin-binding protein 1A (PBP1a). In Vibrio cholerae serotype O1 (strain ATCC 39541 / Classical Ogawa 395 / O395), this protein is Penicillin-binding protein activator LpoA.